A 744-amino-acid chain; its full sequence is MAPSFDHLPDPEEDEYDEEELDISDLRERFEVQLEQGLDTFVVIDGLPEVNEDTKPKLIKFLLRKLDSVGQTKKDSIHMPIGPDGKSHKFAFVEYSSPVEAIAACKALDGVPLDKKHTLRVNKLTDIDRYGREGRIDENYTPPKIEEFTEKEHLRSWLADPAGRGRDQFVMYKDDRVQVLWNNEKDAPESIVDRQHWTESFVQWSPQGTFLTSMHQQGVQLWGGPSWTRQKRFAHPFVNLVDFSPGEKYLTTWSNRPITIGEEGHPALSIDDDGKNYVIWDIETGLPLRSFANLDLPSNSVDADGNPIKRKIQWPAFKWSSDDKYVARLTQGSSISVYELPKMNLLDKTSIKIDGVMDFDWAPATPHREGVKTYEQLFCYWTPEIGSNPAKVGLMSIPSKEVVRTLNLFSVTDAKLHWQSDASYLCVKVDRHSKSKKSLATSLEIFRVKEKGVPVEVVDSIKDTVINFAWEPKGDRFVIITTAEVVAATAVPPKTSVSFYCPEKVKGNGVGNFKHIRTYDKKNSNAIYWSPKGRFVIVATVHSQQSFDMEFYDMDFEGEKPESDKDLTANLQLMNTADHYGVTDIDWDPTGRFVATSASIWKHTMENGYHLYDFKGEQLREEPVEKFKQWLWRPRPPTLLSKEEQKQIRKNLREYSKVFDQEDADRGASADLAVVEHRRRLLDEWLAWRANMEEDVKADREDAGLPLDPLEPLKSKMASGDEGQAIEIEEIVEEIVEETEEIIS.

Residues 1–21 (MAPSFDHLPDPEEDEYDEEEL) form a disordered region. Positions 11–21 (PEEDEYDEEEL) are enriched in acidic residues. The RRM domain maps to 40-126 (TFVVIDGLPE…HTLRVNKLTD (87 aa)). WD repeat units lie at residues 193 to 232 (DRQH…RQKR), 234 to 290 (AHPF…PLRS), 307 to 348 (PIKR…LLDK), and 577 to 622 (ADHY…LREE).

Belongs to the eIF-3 subunit B family. Component of the eukaryotic translation initiation factor 3 (eIF-3) complex.

It localises to the cytoplasm. RNA-binding component of the eukaryotic translation initiation factor 3 (eIF-3) complex, which is involved in protein synthesis of a specialized repertoire of mRNAs and, together with other initiation factors, stimulates binding of mRNA and methionyl-tRNAi to the 40S ribosome. The eIF-3 complex specifically targets and initiates translation of a subset of mRNAs involved in cell proliferation. This Botryotinia fuckeliana (strain B05.10) (Noble rot fungus) protein is Eukaryotic translation initiation factor 3 subunit B (prt1).